We begin with the raw amino-acid sequence, 234 residues long: Chromatin remodeling protein EBS (234 aa).

The BAH domain maps to 29-144; the sequence is KVVRAGDCVL…AATGAFTPDR (116 aa). The PHD-type zinc-finger motif lies at 146 to 197; it reads AVYCKCEMPYNPDDLMVQCEGCKDWYHPACVGMTIEEAKKLDHFVCAECSSD.

This sequence belongs to the SHL1/EBS protein family. Recognizes di- and trimethylated histone H3 at lysine 4 (H3K4me2 and H3K4me3). Interacts with HDA6. As to expression, expressed ubiquitously, with higher levels in floral buds.

The protein localises to the nucleus. Its function is as follows. Chromatin remodeling factor that binds to methylated histone (e.g. H3K4me2/3) to prevent their acetylation (e.g. H3K9K14Ac), likely by recruiting histone deacetylase (HDAC) complexes, and thus regulating the transcription of target genes. Negative regulator in developmental processes in a gibberellic acid- (GA-) dependent manner, such as germination, flowering induction, and flower organ specification, probably by modulating developmental gene expression. Involved in the chromatin-mediated repression of floral initiation and controls genes regulating flowering. Negatively regulates the expression of the floral integrator FT epigenetically, by preventing high levels of H3 acetylation, thus maintaining an inactive chromatin conformation at FT locus. The chain is Chromatin remodeling protein EBS from Arabidopsis thaliana (Mouse-ear cress).